Reading from the N-terminus, the 680-residue chain is DNA ligase (680 aa).

NAD(+) is bound by residues 35 to 39 (DADFD), 86 to 87 (SL), and Glu-111. Lys-113 serves as the catalytic N6-AMP-lysine intermediate. NAD(+) contacts are provided by Arg-134, Glu-174, Lys-290, and Lys-314. Positions 408, 411, 427, and 433 each coordinate Zn(2+). One can recognise a BRCT domain in the interval 597-680 (VAEQTLEGLT…RLLNTGSADE (84 aa)).

It belongs to the NAD-dependent DNA ligase family. LigA subfamily. Mg(2+) serves as cofactor. Mn(2+) is required as a cofactor.

The enzyme catalyses NAD(+) + (deoxyribonucleotide)n-3'-hydroxyl + 5'-phospho-(deoxyribonucleotide)m = (deoxyribonucleotide)n+m + AMP + beta-nicotinamide D-nucleotide.. Its function is as follows. DNA ligase that catalyzes the formation of phosphodiester linkages between 5'-phosphoryl and 3'-hydroxyl groups in double-stranded DNA using NAD as a coenzyme and as the energy source for the reaction. It is essential for DNA replication and repair of damaged DNA. The protein is DNA ligase of Corynebacterium glutamicum (strain R).